Reading from the N-terminus, the 336-residue chain is D-altritol 5-dehydrogenase (336 aa).

7 residues coordinate Zn(2+): Cys-37, His-59, Glu-60, Cys-89, Cys-92, Cys-95, and Cys-103.

This sequence belongs to the zinc-containing alcohol dehydrogenase family. Requires Zn(2+) as cofactor.

It carries out the reaction D-altritol + NAD(+) = keto-D-tagatose + NADH + H(+). The protein operates within carbohydrate metabolism. Functionally, involved in D-altritol catabolism. Catalyzes the oxidation of D-altritol to D-tagatose. The sequence is that of D-altritol 5-dehydrogenase from Agrobacterium fabrum (strain C58 / ATCC 33970) (Agrobacterium tumefaciens (strain C58)).